The sequence spans 726 residues: Catalase-peroxidase (726 aa).

A cross-link (tryptophyl-tyrosyl-methioninium (Trp-Tyr) (with M-252)) is located at residues 98–226 (WHSAGTYRMQ…LAAVHMGLIY (129 aa)). The Proton acceptor role is filled by histidine 99. The tryptophyl-tyrosyl-methioninium (Tyr-Met) (with W-98) cross-link spans 226 to 252 (YVNPEGVNGQPDPARTAQHVRETFARM). Histidine 267 lines the heme b pocket.

This sequence belongs to the peroxidase family. Peroxidase/catalase subfamily. As to quaternary structure, homodimer or homotetramer. The cofactor is heme b. In terms of processing, formation of the three residue Trp-Tyr-Met cross-link is important for the catalase, but not the peroxidase activity of the enzyme.

The catalysed reaction is H2O2 + AH2 = A + 2 H2O. It carries out the reaction 2 H2O2 = O2 + 2 H2O. Functionally, bifunctional enzyme with both catalase and broad-spectrum peroxidase activity. This Roseobacter denitrificans (strain ATCC 33942 / OCh 114) (Erythrobacter sp. (strain OCh 114)) protein is Catalase-peroxidase.